A 235-amino-acid polypeptide reads, in one-letter code: Thaumatin II (235 aa).

The signal sequence occupies residues 1 to 22 (MAATTCFFFLFPFLLLLTLSRA). 8 cysteine pairs are disulfide-bonded: Cys-31-Cys-226, Cys-78-Cys-88, Cys-93-Cys-99, Cys-143-Cys-215, Cys-148-Cys-199, Cys-156-Cys-167, Cys-171-Cys-180, and Cys-181-Cys-186. Positions 230 to 235 (LELEDE) are cleaved as a propeptide — removed in mature form.

Belongs to the thaumatin family.

The protein localises to the cytoplasmic vesicle. Taste-modifying protein; intensely sweet-tasting. It is 100000 times sweeter than sucrose on a molar basis. In Thaumatococcus daniellii (Katemfe), this protein is Thaumatin II.